A 362-amino-acid chain; its full sequence is Glutamate--cysteine ligase (362 aa).

Belongs to the glutamate--cysteine ligase type 2 family. YbdK subfamily.

It carries out the reaction L-cysteine + L-glutamate + ATP = gamma-L-glutamyl-L-cysteine + ADP + phosphate + H(+). Catalyzes the synthesis of gamma-glutamylcysteine (gamma-GC), the main low-molecular-weight thiol compound instead of glutathione in halophilic archaea. This Natronomonas pharaonis (strain ATCC 35678 / DSM 2160 / CIP 103997 / JCM 8858 / NBRC 14720 / NCIMB 2260 / Gabara) (Halobacterium pharaonis) protein is Glutamate--cysteine ligase.